We begin with the raw amino-acid sequence, 129 residues long: UPF0102 protein CT2262 (129 aa).

This sequence belongs to the UPF0102 family.

In Chlorobaculum tepidum (strain ATCC 49652 / DSM 12025 / NBRC 103806 / TLS) (Chlorobium tepidum), this protein is UPF0102 protein CT2262.